The sequence spans 652 residues: Phosphoglucomutase 1, chloroplastic (652 aa).

A chloroplast-targeting transit peptide spans methionine 1–arginine 84. 2 residues coordinate alpha-D-glucose 1,6-bisphosphate: arginine 118 and serine 211. Serine 211 acts as the Phosphoserine intermediate in catalysis. Mg(2+) is bound by residues serine 211, aspartate 376, aspartate 378, and aspartate 380. At serine 211 the chain carries Phosphoserine. Aspartate 380, arginine 381, threonine 443, glutamate 462, serine 464, and lysine 475 together coordinate alpha-D-glucose 1,6-bisphosphate.

The protein belongs to the phosphohexose mutase family. The cofactor is Mg(2+).

It is found in the plastid. The protein resides in the chloroplast. The enzyme catalyses alpha-D-glucose 1-phosphate = alpha-D-glucose 6-phosphate. It catalyses the reaction O-phospho-L-seryl-[protein] + alpha-D-glucose 1-phosphate = alpha-D-glucose 1,6-bisphosphate + L-seryl-[protein]. It carries out the reaction alpha-D-glucose 1,6-bisphosphate + L-seryl-[protein] = O-phospho-L-seryl-[protein] + alpha-D-glucose 6-phosphate. Its activity is regulated as follows. Inhibited by the Calvin cycle intermediates fructose-1,6-bisphosphate and ribulose-1,5-bisphosphate. Functionally, catalyzes the reversible isomerization of alpha-D-glucose 1-phosphate to alpha-D-glucose 6-phosphate. The mechanism proceeds via the intermediate compound alpha-D-glucose 1,6-bisphosphate. This enzyme participates in both the breakdown and synthesis of glucose. Required for sucrose production and accumulation necessary during plant development. Promotes gravitropic responses, negative in shoots but positive in roots, by facilitating starch granules (statoliths) formation. The polypeptide is Phosphoglucomutase 1, chloroplastic (Marchantia polymorpha (Common liverwort)).